Reading from the N-terminus, the 79-residue chain is UPF0291 protein SAV1341 (79 aa).

Positions 56–79 (IDPEGNDVTPEKIKEIQQKRDNKN) are disordered. Residues 64–79 (TPEKIKEIQQKRDNKN) show a composition bias toward basic and acidic residues.

Belongs to the UPF0291 family.

The protein localises to the cytoplasm. In Staphylococcus aureus (strain Mu50 / ATCC 700699), this protein is UPF0291 protein SAV1341.